The primary structure comprises 61 residues: Putative antitoxin VapB13 (61 aa).

The protein belongs to the UPF0165 family.

In terms of biological role, possibly the antitoxin component of a type II toxin-antitoxin (TA) system. Its cognate toxin is VapC13 (Potential). This chain is Putative antitoxin VapB13 (vapB13), found in Archaeoglobus fulgidus (strain ATCC 49558 / DSM 4304 / JCM 9628 / NBRC 100126 / VC-16).